A 337-amino-acid chain; its full sequence is ELAV-like protein 1-A (337 aa).

RRM domains are found at residues 20 to 109, 117 to 197, and 255 to 333; these read TNLI…FARP, ANLY…FAAN, and WCIF…FKTS.

It belongs to the RRM elav family. As to quaternary structure, interacts (via RRM3) with cirbp. Unable to form oligomers. Part of a ribonucleoprotein (RNP) complex, at least composed of elavl1/elrA and/or elavl2/elrB, igf2bp3/vg1RBP, ddx6/Xp54, ybx2/frgy2, lsm14b/rap55b and, in a subset of RNP complexes, stau1/staufen. As to expression, ubiquitously expressed in adults.

Its subcellular location is the cytoplasm. The protein resides in the cell cortex. In terms of biological role, RNA-binding protein that binds to the 3'-UTR region of mRNAs and increases their stability. Involved in embryonic stem cells (ESCs) differentiation: preferentially binds mRNAs that are not methylated by N6-methyladenosine (m6A), stabilizing them, promoting ESCs differentiation. Binds to poly-U elements and AU-rich elements (AREs) in the 3'-UTR of target mRNAs. May be involved in cytoplasmic mRNA polyadenylation. Acts cooperatively with cribp to stabilize AU-rich sequence (ARE)-containing mRNAs. May play a role during gastrulation. Required for the vegetal localization of vg1 mRNA. The protein is ELAV-like protein 1-A (elavl1-a) of Xenopus laevis (African clawed frog).